A 223-amino-acid chain; its full sequence is UPF0441 protein YgiB (223 aa).

Residues 201 to 223 (ESVAKQSTMQRSAAGTSTRSMGG) are disordered. Residues 204-223 (AKQSTMQRSAAGTSTRSMGG) are compositionally biased toward polar residues.

This sequence belongs to the UPF0441 family.

This Salmonella gallinarum (strain 287/91 / NCTC 13346) protein is UPF0441 protein YgiB.